Reading from the N-terminus, the 311-residue chain is MANSTSFLGCSRFYATFEENLKLMGQLVYLIPSFILISKMIYVIQVKHRGDYHEQRRFWLLYTMDLALSLLNLFFDIFYYRLTLFVPQICESFSFFLRANPLLIDITYPLWFYFHVGKMVAQMSISFERMTFNLLKPNDYRRIWKHGLTACVIMIIFVPFSIIWNILISDKYIQFYFGGFQPNYSRRVNWFGTTAWQLTYMQISMAVTLLSNIVTGAILWKSQNQSRKSRLLCRIWFAISTEYLLSACAFCYLHMKTFAFDYSNLIFMLVIFVWDGFNILSPVIMISMNKSLRKQVFAMSGGSEDLEISVA.

The next 7 membrane-spanning stretches (helical) occupy residues 24–44 (MGQL…IYVI), 58–78 (FWLL…FDIF), 101–121 (PLLI…KMVA), 148–168 (LTAC…NILI), 200–220 (YMQI…AILW), 235–255 (IWFA…YLHM), and 266–286 (IFML…VIMI).

This sequence belongs to the nematode receptor-like protein srg family.

The protein localises to the membrane. The polypeptide is Serpentine receptor class gamma-6 (srg-6) (Caenorhabditis elegans).